A 344-amino-acid chain; its full sequence is 3-isopropylmalate dehydrogenase (344 aa).

Substrate contacts are provided by Arg-93, Arg-103, Arg-131, and Asp-215. The Mg(2+) site is built by Asp-215, Asp-239, and Asp-243. 273 to 285 is a binding site for NAD(+); the sequence is GSAPDIAGKGIAN.

Belongs to the isocitrate and isopropylmalate dehydrogenases family. LeuB type 1 subfamily. In terms of assembly, homodimer. It depends on Mg(2+) as a cofactor. Mn(2+) is required as a cofactor.

The protein resides in the cytoplasm. It catalyses the reaction (2R,3S)-3-isopropylmalate + NAD(+) = 4-methyl-2-oxopentanoate + CO2 + NADH. It participates in amino-acid biosynthesis; L-leucine biosynthesis; L-leucine from 3-methyl-2-oxobutanoate: step 3/4. Its function is as follows. Catalyzes the oxidation of 3-carboxy-2-hydroxy-4-methylpentanoate (3-isopropylmalate) to 3-carboxy-4-methyl-2-oxopentanoate. The product decarboxylates to 4-methyl-2 oxopentanoate. The sequence is that of 3-isopropylmalate dehydrogenase from Streptococcus mutans serotype c (strain ATCC 700610 / UA159).